A 119-amino-acid polypeptide reads, in one-letter code: MEKLFNRSDRIAQELQKKIAAIIQHSLKDPRIKTIITVSEVQVSKDLSYAQIFVSFLESDNNEKVKKKITLLNRASSYIRKLLCKRMKLRIVPNIIFHHDDSFLKGNKISCILENLTKK.

Belongs to the RbfA family. As to quaternary structure, monomer. Binds 30S ribosomal subunits, but not 50S ribosomal subunits or 70S ribosomes.

It is found in the cytoplasm. One of several proteins that assist in the late maturation steps of the functional core of the 30S ribosomal subunit. Associates with free 30S ribosomal subunits (but not with 30S subunits that are part of 70S ribosomes or polysomes). Required for efficient processing of 16S rRNA. May interact with the 5'-terminal helix region of 16S rRNA. The polypeptide is Ribosome-binding factor A (Buchnera aphidicola subsp. Acyrthosiphon pisum (strain Tuc7)).